A 506-amino-acid chain; its full sequence is Nucleosome assembly protein 1-like 3 (506 aa).

2 disordered regions span residues 1–95 (MAEA…LGTN) and 157–307 (PTEE…KRED). The segment covering 35 to 70 (SSSSSSSTSDSSSSSSTSGSSSGSGSSSSSSGSTSS) has biased composition (low complexity). Residues 157-178 (PTEEECEWNSEDEEFSSDEEVQ) show a composition bias toward acidic residues. Basic and acidic residues predominate over residues 196–296 (PKENPEVKAE…ERLQDSVDLK (101 aa)).

Belongs to the nucleosome assembly protein (NAP) family.

The protein resides in the nucleus. The sequence is that of Nucleosome assembly protein 1-like 3 (NAP1L3) from Homo sapiens (Human).